Consider the following 636-residue polypeptide: Threonine--tRNA ligase (636 aa).

One can recognise a TGS domain in the interval 1-61 (MINITLPDGK…ETDASVVFIT (61 aa)). The tract at residues 238–528 (DHRKLGTALD…LIEHYAGKFP (291 aa)) is catalytic. The Zn(2+) site is built by cysteine 329, histidine 380, and histidine 505.

Belongs to the class-II aminoacyl-tRNA synthetase family. In terms of assembly, homodimer. Zn(2+) serves as cofactor.

The protein resides in the cytoplasm. The enzyme catalyses tRNA(Thr) + L-threonine + ATP = L-threonyl-tRNA(Thr) + AMP + diphosphate + H(+). Catalyzes the attachment of threonine to tRNA(Thr) in a two-step reaction: L-threonine is first activated by ATP to form Thr-AMP and then transferred to the acceptor end of tRNA(Thr). Also edits incorrectly charged L-seryl-tRNA(Thr). The protein is Threonine--tRNA ligase of Desulfatibacillum aliphaticivorans.